Reading from the N-terminus, the 647-residue chain is 1-deoxy-D-xylulose-5-phosphate synthase (647 aa).

Residues His-74 and 115–117 each bind thiamine diphosphate; that span reads GHS. Asp-146 serves as a coordination point for Mg(2+). Residues 147 to 148, Asn-175, Tyr-286, and Glu-367 contribute to the thiamine diphosphate site; that span reads GA. Asn-175 contributes to the Mg(2+) binding site.

Belongs to the transketolase family. DXPS subfamily. Homodimer. It depends on Mg(2+) as a cofactor. Requires thiamine diphosphate as cofactor.

The enzyme catalyses D-glyceraldehyde 3-phosphate + pyruvate + H(+) = 1-deoxy-D-xylulose 5-phosphate + CO2. The protein operates within metabolic intermediate biosynthesis; 1-deoxy-D-xylulose 5-phosphate biosynthesis; 1-deoxy-D-xylulose 5-phosphate from D-glyceraldehyde 3-phosphate and pyruvate: step 1/1. Functionally, catalyzes the acyloin condensation reaction between C atoms 2 and 3 of pyruvate and glyceraldehyde 3-phosphate to yield 1-deoxy-D-xylulose-5-phosphate (DXP). This Heliobacterium modesticaldum (strain ATCC 51547 / Ice1) protein is 1-deoxy-D-xylulose-5-phosphate synthase.